The primary structure comprises 689 residues: Elongation factor G (689 aa).

The 275-residue stretch at L8–L282 folds into the tr-type G domain. Residues A17–T24, D81–H85, and N135–D138 contribute to the GTP site.

This sequence belongs to the TRAFAC class translation factor GTPase superfamily. Classic translation factor GTPase family. EF-G/EF-2 subfamily.

Its subcellular location is the cytoplasm. Its function is as follows. Catalyzes the GTP-dependent ribosomal translocation step during translation elongation. During this step, the ribosome changes from the pre-translocational (PRE) to the post-translocational (POST) state as the newly formed A-site-bound peptidyl-tRNA and P-site-bound deacylated tRNA move to the P and E sites, respectively. Catalyzes the coordinated movement of the two tRNA molecules, the mRNA and conformational changes in the ribosome. This chain is Elongation factor G, found in Mycoplasma mycoides subsp. mycoides SC (strain CCUG 32753 / NCTC 10114 / PG1).